The sequence spans 378 residues: Ribosomal RNA large subunit methyltransferase G (378 aa).

Belongs to the methyltransferase superfamily. RlmG family.

The protein localises to the cytoplasm. It carries out the reaction guanosine(1835) in 23S rRNA + S-adenosyl-L-methionine = N(2)-methylguanosine(1835) in 23S rRNA + S-adenosyl-L-homocysteine + H(+). Specifically methylates the guanine in position 1835 (m2G1835) of 23S rRNA. The chain is Ribosomal RNA large subunit methyltransferase G from Shigella boydii serotype 18 (strain CDC 3083-94 / BS512).